The following is a 486-amino-acid chain: UDP-N-acetylglucosamine pyrophosphorylase (486 aa).

The Substrate binding signature appears at Met-109–Gly-112. UTP-binding positions include Met-109 to Gly-112, Lys-123, Gln-199, and Gly-226. Position 227 (Asn-227) interacts with substrate. UTP is bound at residue Asp-257. The short motif at Glu-309–Tyr-310 is the Substrate binding element. Lys-389 is a binding site for UTP. Lys-421 lines the substrate pocket.

This sequence belongs to the UDPGP type 1 family.

The protein localises to the cytoplasm. The enzyme catalyses N-acetyl-alpha-D-glucosamine 1-phosphate + UTP + H(+) = UDP-N-acetyl-alpha-D-glucosamine + diphosphate. Its pathway is nucleotide-sugar biosynthesis; UDP-N-acetyl-alpha-D-glucosamine biosynthesis; UDP-N-acetyl-alpha-D-glucosamine from N-acetyl-alpha-D-glucosamine 1-phosphate: step 1/1. In Candida albicans (Yeast), this protein is UDP-N-acetylglucosamine pyrophosphorylase (UAP1).